The sequence spans 466 residues: DNA polymerase delta subunit 3 (466 aa).

The residue at position 2 (alanine 2) is an N-acetylalanine. Disordered stretches follow at residues 169 to 188 (NNEL…VSQQ) and 199 to 232 (KAAA…PGKG). A compositionally biased stretch (basic and acidic residues) spans 206–217 (ETNKETKTEAKE). Lysine 258 participates in a covalent cross-link: Glycyl lysine isopeptide (Lys-Gly) (interchain with G-Cter in SUMO); alternate. Lysine 258 is covalently cross-linked (Glycyl lysine isopeptide (Lys-Gly) (interchain with G-Cter in SUMO2); alternate). Residue lysine 261 forms a Glycyl lysine isopeptide (Lys-Gly) (interchain with G-Cter in SUMO2) linkage. Disordered stretches follow at residues 274–393 (KLAT…KTYL) and 406–466 (ESES…FQRK). At threonine 277 the chain carries Phosphothreonine. A compositionally biased stretch (basic and acidic residues) spans 286–296 (KKAEPVKVLQK). The residue at position 307 (serine 307) is a Phosphoserine. Over residues 349-361 (PSPPPPPSPPLEP) the composition is skewed to pro residues. Phosphoserine is present on residues serine 407 and serine 409. Position 411 is a phosphothreonine (threonine 411). Serine 413 carries the phosphoserine modification. Basic and acidic residues predominate over residues 432 to 441 (VKKEPREERK). A Glycyl lysine isopeptide (Lys-Gly) (interchain with G-Cter in SUMO); alternate cross-link involves residue lysine 433. Lysine 433 participates in a covalent cross-link: Glycyl lysine isopeptide (Lys-Gly) (interchain with G-Cter in SUMO2); alternate. Over residues 455 to 466 (RQVSITGFFQRK) the composition is skewed to polar residues. The PIP-box signature appears at 456-463 (QVSITGFF). Serine 458 carries the post-translational modification Phosphoserine.

In terms of assembly, component of both the DNA polymerase delta and DNA polymerase zeta complexes. The tetrameric DNA polymerase delta complex (Pol-delta4), which consists of POLD1/p125, POLD2/p50, POLD3/p66/p68 and POLD4/p12, with POLD1 bearing DNA polymerase and 3' to 5' proofreading exonuclease activities. Within this complex, directly interacts with POLD2. Following stress caused by DNA damaging agents or by replication stress, POLD4 is degraded and Pol-delta4 is converted into a trimeric form of the complex (Pol-delta3), which consists of POLD1, POLD2 and POLD3. Pol-delta3 is the major form occurring at S phase replication sites, as well as DNA damage sites. Directly interacts with PCNA, as do POLD1 and POLD4; this interaction stimulates Pol-delta polymerase activity. POLD3 phosphorylation at Ser-458 impairs PCNA binding. Component of the DNA polymerase zeta complex (POLZ), which consists of REV3L, MAD2L2, POLD2 and POLD3, with REV3L bearing DNA polymerase catalytic activity. The DNA polymerase delta complex interacts with POLDIP2; this interaction is probably mediated through direct binding to POLD2. Ubiquitinated, but not targeted to the proteasome. Sumoylated. Sumoylation with SUMO3 may be predominant. Post-translationally, phosphorylation at Ser-458 is catalyzed in vitro by PKA. It is thought to decrease the affinity for PCNA and Pol-delta4 processivity. Can also be phosphorylated in vitro by CDK1-cyclin-A complex, as well as CDK2-cyclin-A and CDK2-cyclin-E complexes. PCNA interferes with CDK-cyclin phosphorylation.

It is found in the cytoplasm. The protein resides in the nucleus. Functionally, accessory component of both the DNA polymerase delta complex and the DNA polymerase zeta complex. As a component of the trimeric and tetrameric DNA polymerase delta complexes (Pol-delta3 and Pol-delta4, respectively), plays a role in high fidelity genome replication, including in lagging strand synthesis, and repair. Required for optimal Pol-delta activity. Stabilizes the Pol-delta complex and plays a major role in Pol-delta stimulation by PCNA. Pol-delta3 and Pol-delta4 are characterized by the absence or the presence of POLD4. They exhibit differences in catalytic activity. Most notably, Pol-delta3 shows higher proofreading activity than Pol-delta4. Although both Pol-delta3 and Pol-delta4 process Okazaki fragments in vitro, Pol-delta3 may also be better suited to fulfill this task, exhibiting near-absence of strand displacement activity compared to Pol-delta4 and stalling on encounter with the 5'-blocking oligonucleotides. Pol-delta3 idling process may avoid the formation of a gap, while maintaining a nick that can be readily ligated. Along with DNA polymerase kappa, DNA polymerase delta carries out approximately half of nucleotide excision repair (NER) synthesis following UV irradiation. In this context, POLD3, along with PCNA and RFC1-replication factor C complex, is required to recruit POLD1, the catalytic subunit of the polymerase delta complex, to DNA damage sites. Under conditions of DNA replication stress, required for the repair of broken replication forks through break-induced replication (BIR). Involved in the translesion synthesis (TLS) of templates carrying O6-methylguanine or abasic sites performed by Pol-delta4, independently of DNA polymerase zeta (REV3L) or eta (POLH). Facilitates abasic site bypass by DNA polymerase delta by promoting extension from the nucleotide inserted opposite the lesion. Also involved in TLS, as a component of the tetrameric DNA polymerase zeta complex. Along with POLD2, dramatically increases the efficiency and processivity of DNA synthesis of the DNA polymerase zeta complex compared to the minimal zeta complex, consisting of only REV3L and REV7. This chain is DNA polymerase delta subunit 3 (POLD3), found in Homo sapiens (Human).